We begin with the raw amino-acid sequence, 127 residues long: Ribosome-binding factor A (127 aa).

This sequence belongs to the RbfA family. In terms of assembly, monomer. Binds 30S ribosomal subunits, but not 50S ribosomal subunits or 70S ribosomes.

The protein localises to the cytoplasm. Functionally, one of several proteins that assist in the late maturation steps of the functional core of the 30S ribosomal subunit. Associates with free 30S ribosomal subunits (but not with 30S subunits that are part of 70S ribosomes or polysomes). Required for efficient processing of 16S rRNA. May interact with the 5'-terminal helix region of 16S rRNA. The protein is Ribosome-binding factor A of Actinobacillus pleuropneumoniae serotype 7 (strain AP76).